The following is a 404-amino-acid chain: MKLPIYLDYSATTPVDPRVAQKMSECLLVDGNFGNPASRSHVFGWKAEEAVENARRQVADLVNADPREIVWTSGATESDNLAIKGAAHFYATKGKHLITTKIEHKAVLDTMRQLEREGFEVTYLEPTTDGIVTPAMIEAALREDTILVSVIHVNNEIGTINDIAAIGELTRSKGILLHVDAAQSTGKVDIDLSKLKVDLMSFSAHKTYGPKGIGALYVSRKPRVRIEATMHGGGHERGMRSGTLATHQIVGMGEAFRVAKEDMAAENVRIKALSDRFYKQVENLEELYINGSMTARVPHNLNLSFNYVEGESLIMALKDLAVSSGSACTSASLEPSYVLRALGRNDELAHSSIRFTFGRFTTEEQVDYAAQKVCEAVNKLRVLSPLWDMYKDGVDISKIEWAAH.

Residues 75–76 (AT), Asn155, Gln183, and 203–205 (SAH) each bind pyridoxal 5'-phosphate. Lys206 is modified (N6-(pyridoxal phosphate)lysine). Position 243 (Thr243) interacts with pyridoxal 5'-phosphate. Cys328 serves as the catalytic Cysteine persulfide intermediate. [2Fe-2S] cluster is bound at residue Cys328.

It belongs to the class-V pyridoxal-phosphate-dependent aminotransferase family. NifS/IscS subfamily. Homodimer. Forms a heterotetramer with IscU, interacts with other sulfur acceptors. It depends on pyridoxal 5'-phosphate as a cofactor.

It localises to the cytoplasm. The enzyme catalyses (sulfur carrier)-H + L-cysteine = (sulfur carrier)-SH + L-alanine. Its pathway is cofactor biosynthesis; iron-sulfur cluster biosynthesis. Its function is as follows. Master enzyme that delivers sulfur to a number of partners involved in Fe-S cluster assembly, tRNA modification or cofactor biosynthesis. Catalyzes the removal of elemental sulfur atoms from cysteine to produce alanine. Functions as a sulfur delivery protein for Fe-S cluster synthesis onto IscU, an Fe-S scaffold assembly protein, as well as other S acceptor proteins. This is Cysteine desulfurase IscS from Pseudomonas fluorescens (strain SBW25).